The following is a 65-amino-acid chain: VESP-VB2 (65 aa).

The first 23 residues, 1–23 (MKMSILFLFALIASLACLQLTFA), serve as a signal peptide directing secretion. AXPX repeat units follow at residues 23 to 26 (AAPA), 27 to 30 (ASPF), 31 to 34 (ANPG), 35 to 38 (ASPE), 39 to 42 (AAPL), 43 to 46 (ADPL), and 47 to 50 (ADPF). The propeptide occupies 24 to 49 (APAASPFANPGASPEAAPLADPLADP). Leucine amide is present on leucine 62.

The protein belongs to the MCD family. Mastoparan subfamily. As to expression, expressed by the venom gland.

Its subcellular location is the secreted. In terms of biological role, antimicrobial peptide. Shows activity against both Gram-positive and -negative bacteria, as well against fungi. Also promotes important mast cell degranulation. Shows little hemolytic activity on rabbit and human erythrocytes. Its mast cell degranulation activity may be related to the activation of G-protein coupled receptors in mast cells as well as interaction with other proteins located in cell endosomal membranes in the mast cells. The protein is VESP-VB2 of Vespa bicolor (Black shield wasp).